The following is a 570-amino-acid chain: Sulfite reductase [NADPH] hemoprotein beta-component (570 aa).

Residues Cys434, Cys440, Cys479, and Cys483 each contribute to the [4Fe-4S] cluster site. Cys483 provides a ligand contact to siroheme.

The protein belongs to the nitrite and sulfite reductase 4Fe-4S domain family. As to quaternary structure, alpha(8)-beta(8). The alpha component is a flavoprotein, the beta component is a hemoprotein. Siroheme is required as a cofactor. It depends on [4Fe-4S] cluster as a cofactor.

The catalysed reaction is hydrogen sulfide + 3 NADP(+) + 3 H2O = sulfite + 3 NADPH + 4 H(+). It functions in the pathway sulfur metabolism; hydrogen sulfide biosynthesis; hydrogen sulfide from sulfite (NADPH route): step 1/1. Functionally, component of the sulfite reductase complex that catalyzes the 6-electron reduction of sulfite to sulfide. This is one of several activities required for the biosynthesis of L-cysteine from sulfate. This is Sulfite reductase [NADPH] hemoprotein beta-component from Enterobacter sp. (strain 638).